We begin with the raw amino-acid sequence, 464 residues long: Protein FAM90A15 (464 aa).

3 disordered regions span residues 1–42 (MMAR…DPRL), 70–389 (PATL…HDGA), and 415–437 (HSPE…SEAP). 2 stretches are compositionally biased toward basic and acidic residues: residues 74–89 (GKKE…KPRV) and 97–114 (NKDK…DPQR). Over residues 180–197 (LASLSPLRKASLSSSSSL) the composition is skewed to low complexity.

It belongs to the FAM90 family.

The polypeptide is Protein FAM90A15 (Homo sapiens (Human)).